Reading from the N-terminus, the 334-residue chain is Nucleoid-associated protein SG1574 (334 aa).

Belongs to the YejK family.

It localises to the cytoplasm. The protein localises to the nucleoid. The chain is Nucleoid-associated protein SG1574 from Sodalis glossinidius (strain morsitans).